We begin with the raw amino-acid sequence, 577 residues long: Cell pattern formation-associated protein stuA (577 aa).

Residues 1-41 (MNQPQPYMDQHAPAPPPASNMTQYSNYGAPQPLQPATHGYG) are disordered. Residues 19–28 (SNMTQYSNYG) show a composition bias toward polar residues. The region spanning 111–217 (RVTATLWEDE…HNIGALLYHP (107 aa)) is the HTH APSES-type domain. Residues 145–166 (GTKLLNVAGMTRGRRDGILKSE) constitute a DNA-binding region (H-T-H motif). Disordered stretches follow at residues 228–487 (ATMA…QLPS) and 518–577 (QYPA…AVRR). 2 stretches are compositionally biased toward polar residues: residues 238 to 251 (SQEY…TQAP) and 319 to 333 (AVNS…SQGM). A compositionally biased stretch (low complexity) spans 334 to 350 (PQYQTSQPPYTQSYSTP). Polar residues predominate over residues 351–364 (GSYSQPQYTHQQPG). The segment covering 390–399 (AENDHPDHKV) has biased composition (basic and acidic residues). Over residues 465 to 479 (TPRTTNPYTGYNNTP) the composition is skewed to low complexity. The tract at residues 526-552 (KRGREDDDQVDPYGRPSSALGEHKRQR) is nuclear localization domain.

It belongs to the EFG1/PHD1/stuA family.

It localises to the nucleus. In terms of biological role, transcription factor that regulates asexual reproduction. Binds the StuA-response elements (StRE) with the consensus sequence 5'-(A/T)CGCG(T/A)N(A/C)-3' at the promoters of target genes. This is Cell pattern formation-associated protein stuA from Dothistroma septosporum (strain NZE10 / CBS 128990) (Red band needle blight fungus).